The chain runs to 577 residues: Probable cytochrome c biosynthesis protein (577 aa).

Belongs to the CcmF/CycK/Ccl1/NrfE/CcsA family.

The protein resides in the mitochondrion. Functionally, could be involved in assembly and maturation of cytochromes c. May play a role in guidance of apocytochromes and heme groups for the covalent linkage introduced by the cytochrome-c-heme lyase. This Oenothera berteroana (Bertero's evening primrose) protein is Probable cytochrome c biosynthesis protein.